Here is a 401-residue protein sequence, read N- to C-terminus: MVERASKFVLVVAGSACFMLILYQYAGPGLSLGAPGGRAPPDDLDLFPTPDPHYEKKYYFPVRELERSLRFDMKGDDVIVFLHIQKTGGTTFGRHLVQNVRLEVPCDCRPGQKKCTCYRPNRRETWLFSRFSTGWSCGLHADWTELTNCVPGVLDRRDPAGLRSPRKFYYITLLRDPVSRYLSEWRHVQRGATWKTSLHMCDGRTPTPEELPPCYEGTDWSGCTLQEFMDCPYNLANNRQVRMLADLSLVGCYNLSFIPESKRAQLLLESAKKNLRGMAFFGLTEFQRKTQYLFERTFNLKFIRPFMQYNSTRAGGVEVDEDTIRHIEELNDLDMQLYDYAKDLFQQRYQYKRQLERREQRLRNREERLLHRSKEALPREDTEEPGRVPTEDYMSHIIEKW.

Residues 1-4 are Cytoplasmic-facing; the sequence is MVER. The chain crosses the membrane as a helical; Signal-anchor for type II membrane protein span at residues 5-27; sequence ASKFVLVVAGSACFMLILYQYAG. Residues 28-401 are Lumenal-facing; that stretch reads PGLSLGAPGG…DYMSHIIEKW (374 aa). 83-91 provides a ligand contact to 3'-phosphoadenylyl sulfate; the sequence is HIQKTGGTT. Substrate is bound by residues 113-114, arginine 130, tryptophan 135, and histidine 140; that span reads KK. Residue histidine 140 is the Proton acceptor of the active site. 3'-phosphoadenylyl sulfate contacts are provided by arginine 175 and serine 183. Substrate is bound by residues histidine 187 and tryptophan 194. N-linked (GlcNAc...) asparagine glycosylation is present at asparagine 254. 307–309 provides a ligand contact to 3'-phosphoadenylyl sulfate; it reads MQY. A glycan (N-linked (GlcNAc...) asparagine) is linked at asparagine 310. Position 313 to 314 (313 to 314) interacts with 3'-phosphoadenylyl sulfate; the sequence is RA. The segment at 367–389 is disordered; sequence ERLLHRSKEALPREDTEEPGRVP.

Belongs to the sulfotransferase 6 family. N-glycosylated.

The protein resides in the membrane. The enzyme catalyses alpha-D-glucosaminyl-[heparan sulfate](n) + 3'-phosphoadenylyl sulfate = 6-sulfo-alpha-D-glucosaminyl-[heparan sulfate](n) + adenosine 3',5'-bisphosphate + H(+). Inhibited by dithiothreitol and stimulated by protamine. Functionally, 6-O-sulfation enzyme which catalyzes the transfer of sulfate from 3'-phosphoadenosine 5'-phosphosulfate (PAPS) to position 6 of the N-sulfoglucosamine residue (GlcNS) of heparan sulfate. Also transfers sulfate to CDSNS-heparin and performs the crucial step modification in the biosynthesis of anticoagulant heparan sulfate (HSact). Critical for normal neuronal development where it may play a role in neuron branching. May also play a role in limb development. May prefer iduronic acid. This chain is Heparan-sulfate 6-O-sulfotransferase 1, found in Cricetulus griseus (Chinese hamster).